Reading from the N-terminus, the 291-residue chain is MDDEVREKLIEAGKILKQAVNEAAEKIAPGVKILEVAEFVENRIIELGAKPAFPANISINSDAAHFTPKKNDERTFKEGDVVKLDVGAHIDGYIADMAVTVDLGDNTELVKAAKEALEAAMEVVRAGVSVSEIGKAIEDAITNYGFKPIVNLTGHGLLPYLNHAPPSIYNYATEKGVTLEEGMVVAIEPFATNGVGKVGERGECEIYSLLNPRPVRMKMAREILKEVEENYKTLPFAKRWLKKAPDIIISKLAREGVLRAYPVLTEVSGGLVSQWEHTLIVEDGGATITTK.

His-65 lines the substrate pocket. A divalent metal cation contacts are provided by Asp-85, Asp-96, and His-155. His-163 contributes to the substrate binding site. Residues Glu-188 and Glu-276 each contribute to the a divalent metal cation site.

This sequence belongs to the peptidase M24A family. Methionine aminopeptidase archaeal type 2 subfamily. Monomer. Requires Co(2+) as cofactor. It depends on Zn(2+) as a cofactor. Mn(2+) serves as cofactor. The cofactor is Fe(2+).

The catalysed reaction is Release of N-terminal amino acids, preferentially methionine, from peptides and arylamides.. Its function is as follows. Removes the N-terminal methionine from nascent proteins. The N-terminal methionine is often cleaved when the second residue in the primary sequence is small and uncharged (Met-Ala-, Cys, Gly, Pro, Ser, Thr, or Val). The protein is Methionine aminopeptidase of Archaeoglobus fulgidus (strain ATCC 49558 / DSM 4304 / JCM 9628 / NBRC 100126 / VC-16).